The chain runs to 333 residues: Heat shock transcription factor, X-linked member 4 (333 aa).

Residues 1–66 form a disordered region; that stretch reads MASQNTEQEY…QDNSPPEDRN (66 aa). The segment covering 29-39 has biased composition (low complexity); sequence GSSPDPNPDSS. Residues 49–60 show a composition bias toward polar residues; it reads AMSQDPGSQDNS. The DNA-binding element occupies 79–182; it reads FRLSFPRKLW…PRLLENIQRK (104 aa). The interval 227–275 is disordered; it reads QGAPSVQGPSGTQSFRRSGMWSKKSATRHPLGNGPPQEPNGPSWEGTSG. Positions 228 to 242 are enriched in polar residues; the sequence is GAPSVQGPSGTQSFR.

This sequence belongs to the HSF family.

It localises to the nucleus. This Homo sapiens (Human) protein is Heat shock transcription factor, X-linked member 4.